We begin with the raw amino-acid sequence, 395 residues long: MIIKPKVRGFICTNAHPEGCAANVREQIDFVKSQGEIADGPKKVLVIGASTGYGLASRITAAFGCGAATLGVFFEKPGTERKTGSAGFYNSVGFHAEAEKAGLYAKSINGDAFSDEIKAKAIDVIKRDLGKVDLVVYSLASPRRTDPKTGELYSSVLKPIGQSYTAKNLNTDTLKIADMTIEAANEEEIANTVKVMGGEDWELWVEALKEADVLAENAKTVAYTYIGDKLTWPIYGKATIGRAKEDLDRAATAINQKLADLGGSANVAVLKALVTQSSSAIPIMPLYISILYKVMKEEGTHEGCIEQLYRLFTEGVYTDTPRLDDANRFRMDEKELAAELQAKVEAIWPNVTEENLFEETDYKGYNAEFLKLFGFGVDGIDYEKDVAPDVALDLE.

Residues 48-53 (GASTGY), 74-75 (FE), 111-112 (DA), and 139-140 (LA) each bind NAD(+). Tyrosine 225 is a binding site for substrate. Catalysis depends on tyrosine 235, which acts as the Proton donor. Residues lysine 244 and 273-275 (LVT) contribute to the NAD(+) site.

The protein belongs to the TER reductase family. In terms of assembly, monomer.

The enzyme catalyses a 2,3-saturated acyl-[ACP] + NAD(+) = a (2E)-enoyl-[ACP] + NADH + H(+). It participates in lipid metabolism; fatty acid biosynthesis. Involved in the final reduction of the elongation cycle of fatty acid synthesis (FAS II). Catalyzes the reduction of a carbon-carbon double bond in an enoyl moiety that is covalently linked to an acyl carrier protein (ACP). This chain is Enoyl-[acyl-carrier-protein] reductase [NADH], found in Saccharophagus degradans (strain 2-40 / ATCC 43961 / DSM 17024).